We begin with the raw amino-acid sequence, 197 residues long: Phospholipid hydroperoxide glutathione peroxidase (197 aa).

At S40 the chain carries Phosphoserine. U73 is a catalytic residue. A non-standard amino acid (selenocysteine) is located at residue U73.

The protein belongs to the glutathione peroxidase family. In terms of assembly, monomer. Has a tendency to form higher mass oligomers. Interacts with FUNDC1; this interaction promotes GPX4 recruitment into mitochondria through TOM/TIM complex where it is degraded by mitophagy. Expressed very intensively in the testis and weakly in lung, heart, and cerebellum.

It is found in the mitochondrion. Its subcellular location is the cytoplasm. It carries out the reaction a hydroperoxy polyunsaturated fatty acid + 2 glutathione = a hydroxy polyunsaturated fatty acid + glutathione disulfide + H2O. The enzyme catalyses 2 glutathione + H2O2 = glutathione disulfide + 2 H2O. The catalysed reaction is tert-butyl hydroperoxide + 2 glutathione = tert-butanol + glutathione disulfide + H2O. It catalyses the reaction cumene hydroperoxide + 2 glutathione = 2-phenylpropan-2-ol + glutathione disulfide + H2O. It carries out the reaction (9S)-hydroperoxy-(10E,12Z)-octadecadienoate + 2 glutathione = (9S)-hydroxy-(10E,12Z)-octadecadienoate + glutathione disulfide + H2O. The enzyme catalyses (13S)-hydroperoxy-(9Z,11E)-octadecadienoate + 2 glutathione = (13S)-hydroxy-(9Z,11E)-octadecadienoate + glutathione disulfide + H2O. The catalysed reaction is (5S)-hydroperoxy-(6E,8Z,11Z,14Z)-eicosatetraenoate + 2 glutathione = (5S)-hydroxy-(6E,8Z,11Z,14Z)-eicosatetraenoate + glutathione disulfide + H2O. It catalyses the reaction (12R)-hydroperoxy-(5Z,8Z,10E,14Z)-eicosatetraenoate + 2 glutathione = (12R)-hydroxy-(5Z,8Z,10E,14Z)-eicosatetraenoate + glutathione disulfide + H2O. It carries out the reaction (12S)-hydroperoxy-(5Z,8Z,10E,14Z)-eicosatetraenoate + 2 glutathione = (12S)-hydroxy-(5Z,8Z,10E,14Z)-eicosatetraenoate + glutathione disulfide + H2O. The enzyme catalyses (15S)-hydroperoxy-(5Z,8Z,11Z,13E)-eicosatetraenoate + 2 glutathione = (15S)-hydroxy-(5Z,8Z,11Z,13E)-eicosatetraenoate + glutathione disulfide + H2O. The catalysed reaction is (5S)-hydroperoxy-(6E,8Z,11Z,14Z,17Z)-eicosapentaenoate + 2 glutathione = (5S)-hydroxy-(6E,8Z,11Z,14Z,17Z)-eicosapentaenoate + glutathione disulfide + H2O. It catalyses the reaction (12S)-hydroperoxy-(5Z,8Z,10E,14Z,17Z)-eicosapentaenoate + 2 glutathione = (12S)-hydroxy-(5Z,8Z,10E,14Z,17Z)-eicosapentaenoate + glutathione disulfide + H2O. It carries out the reaction (15S)-hydroperoxy-(5Z,8Z,11Z,13E,17Z)-eicosapentaenoate + 2 glutathione = (15S)-hydroxy-(5Z,8Z,11Z,13E,17Z)-eicosapentaenoate + glutathione disulfide + H2O. The enzyme catalyses (15S)-hydroperoxy-(11Z,13E)-eicosadienoate + 2 glutathione = (15S)-hydroxy-(11Z,13E)-eicosadienoate + glutathione disulfide + H2O. The catalysed reaction is (17S)-hydroperoxy-(4Z,7Z,10Z,13Z,15E,19Z)-docosahexaenoate + 2 glutathione = (17S)-hydroxy-(4Z,7Z,10Z,13Z,15E,19Z)-docosahexaenoate + glutathione disulfide + H2O. It catalyses the reaction a hydroperoxy-1,2-diacyl-glycero-3-phosphocholine + 2 glutathione = a hydroxy-1,2-diacyl-glycero-3-phosphocholine + glutathione disulfide + H2O. Functionally, essential antioxidant peroxidase that directly reduces phospholipid hydroperoxide even if they are incorporated in membranes and lipoproteins. Can also reduce fatty acid hydroperoxide, cholesterol hydroperoxide and thymine hydroperoxide. Plays a key role in protecting cells from oxidative damage by preventing membrane lipid peroxidation. Required to prevent cells from ferroptosis, a non-apoptotic cell death resulting from an iron-dependent accumulation of lipid reactive oxygen species. The presence of selenocysteine (Sec) versus Cys at the active site is essential for life: it provides resistance to overoxidation and prevents cells against ferroptosis. The presence of Sec at the active site is also essential for the survival of a specific type of parvalbumin-positive interneurons, thereby preventing against fatal epileptic seizures. May be required to protect cells from the toxicity of ingested lipid hydroperoxides. Required for normal sperm development and male fertility. Essential for maturation and survival of photoreceptor cells. Plays a role in a primary T-cell response to viral and parasitic infection by protecting T-cells from ferroptosis and by supporting T-cell expansion. Plays a role of glutathione peroxidase in platelets in the arachidonic acid metabolism. Reduces hydroperoxy ester lipids formed by a 15-lipoxygenase that may play a role as down-regulator of the cellular 15-lipoxygenase pathway. Can also reduce small soluble hydroperoxides such as H2O2, cumene hydroperoxide and tert-butyl hydroperoxide. This chain is Phospholipid hydroperoxide glutathione peroxidase, found in Macaca fuscata fuscata (Japanese macaque).